Consider the following 1123-residue polypeptide: Telomerase reverse transcriptase (1123 aa).

The RNA-interacting domain 1 stretch occupies residues 1–230 (MPRAPRCRAV…ARRRRGSPGS (230 aa)). Residues 58-197 (VPWGARPPPA…APGLPGLPGL (140 aa)) form a GQ motif region. The tract at residues 137 to 141 (WGLLL) is required for regulating specificity for telomeric DNA and for processivity for primer elongation. A disordered region spans residues 202–311 (AGAGASADLR…GVPHDPAHPE (110 aa)). The Bipartite nuclear localization signal signature appears at 222-240 (RRRRGSPGSGVPLAKRPRR). Ser227 is subject to Phosphoserine; by PKB/AKT1. The segment at 231–308 (GVPLAKRPRR…GPQGVPHDPA (78 aa)) is linker. Over residues 260–279 (PPVSEAPAVTPAVAASPAAS) the composition is skewed to low complexity. Residues 309–539 (HPETKRFLYC…LARFLVLVDG (231 aa)) form an RNA-interacting domain 2 region. A TFLY; involved in RNA binding motif is present at residues 312 to 317 (TKRFLY). The QFP motif stretch occupies residues 360 to 510 (ARRMRRLPAR…MKVRDCTWLH (151 aa)). Residues 381 to 401 (LGNHARCPYRALLRTHCPLRA) are CP motif. A Phosphoserine; by DYRK2 modification is found at Ser446. The Reverse transcriptase domain maps to 595 to 926 (EVRRHREARP…CLFPWCGLLL (332 aa)). Tyr697 carries the post-translational modification Phosphotyrosine; by SRC-type Tyr-kinases. Mg(2+)-binding residues include Asp702, Asp859, and Asp860. The interval 905–919 (LGSAAPLQLPAHCLF) is required for oligomerization. Residues 921-925 (WCGLL) are primer grip sequence. The CTE stretch occupies residues 927 to 1123 (DTRTLEVSCD…LTADFKTILD (197 aa)).

The protein belongs to the reverse transcriptase family. Telomerase subfamily. As to quaternary structure, catalytic component of the telomerase holoenzyme complex composed of one molecule of TERT, one molecule of WRAP53/TCAB1, two molecules of H/ACA ribonucleoprotein complex subunits DKC1, NOP10, NHP2 and GAR1, and a telomerase RNA template component (TERC). The telomerase holoenzyme complex is associated with TEP1, SMG6/EST1A and POT1. The molecular chaperone HSP90/P23 complex is required for correct assembly and stabilization of the active telomerase. Interacts directly with HSP90A and PTGES3. Interacts with HSPA1A; the interaction occurs in the absence of TERC and dissociates once the complex has formed. Interacts with RAN; the interaction promotes nuclear export of TERT. Interacts with XPO1. Interacts with PTPN11; the interaction retains TERT in the nucleus. Interacts with NCL (via RRM1 and C-terminal RRM4/Arg/Gly-rich domains); the interaction is important for nucleolar localization of TERT. Interacts with SMARCA4 (via the bromodomain); the interaction regulates Wnt-mediated signaling. Interacts with MCRS1 (isoform MCRS2); the interaction inhibits in vitro telomerase activity. Interacts with PIF1; the interaction has no effect on the elongation activity of TERT. Interacts with PML; the interaction recruits TERT to PML bodies and inhibits telomerase activity. Interacts with GNL3L. Interacts with isoform 1 and isoform 2 of NVL. Interacts with DHX36. Interacts with ATF7. In terms of processing, phosphorylation at Tyr-697 under oxidative stress leads to translocation of TERT to the cytoplasm and reduces its antiapoptotic activity. Dephosphorylated by SHP2/PTPN11 leading to nuclear retention. Phosphorylation at Ser-227 by the AKT pathway promotes nuclear location. Phosphorylation at the G2/M phase at Ser-446 by DYRK2 promotes ubiquitination by the EDVP complex and degradation. Ubiquitinated by the EDVP complex, a E3 ligase complex following phosphorylation at Ser-446 by DYRK2. Ubiquitinated leads to proteasomal degradation.

Its subcellular location is the nucleus. It localises to the nucleolus. The protein localises to the nucleoplasm. The protein resides in the chromosome. It is found in the telomere. Its subcellular location is the cytoplasm. It localises to the PML body. The catalysed reaction is DNA(n) + a 2'-deoxyribonucleoside 5'-triphosphate = DNA(n+1) + diphosphate. In terms of biological role, telomerase is a ribonucleoprotein enzyme essential for the replication of chromosome termini in most eukaryotes. Active in progenitor and cancer cells. Inactive, or very low activity, in normal somatic cells. Catalytic component of the teleromerase holoenzyme complex whose main activity is the elongation of telomeres by acting as a reverse transcriptase that adds simple sequence repeats to chromosome ends by copying a template sequence within the RNA component of the enzyme. Catalyzes the RNA-dependent extension of 3'-chromosomal termini with the 6-nucleotide telomeric repeat unit, 5'-TTAGGG-3'. The catalytic cycle involves primer binding, primer extension and release of product once the template boundary has been reached or nascent product translocation followed by further extension. More active on substrates containing 2 or 3 telomeric repeats. Telomerase activity is regulated by a number of factors including telomerase complex-associated proteins, chaperones and polypeptide modifiers. Modulates Wnt signaling. Plays important roles in aging and antiapoptosis. The sequence is that of Telomerase reverse transcriptase (TERT) from Canis lupus familiaris (Dog).